The primary structure comprises 241 residues: Proteasome subunit alpha (241 aa).

It belongs to the peptidase T1A family. As to quaternary structure, the 20S proteasome core is composed of 14 alpha and 14 beta subunits that assemble into four stacked heptameric rings, resulting in a barrel-shaped structure. The two inner rings, each composed of seven catalytic beta subunits, are sandwiched by two outer rings, each composed of seven alpha subunits. The catalytic chamber with the active sites is on the inside of the barrel. Has a gated structure, the ends of the cylinder being occluded by the N-termini of the alpha-subunits. Is capped at one or both ends by the proteasome regulatory ATPase, PAN.

Its subcellular location is the cytoplasm. The formation of the proteasomal ATPase PAN-20S proteasome complex, via the docking of the C-termini of PAN into the intersubunit pockets in the alpha-rings, triggers opening of the gate for substrate entry. Interconversion between the open-gate and close-gate conformations leads to a dynamic regulation of the 20S proteasome proteolysis activity. In terms of biological role, component of the proteasome core, a large protease complex with broad specificity involved in protein degradation. The polypeptide is Proteasome subunit alpha (Methanosphaerula palustris (strain ATCC BAA-1556 / DSM 19958 / E1-9c)).